Reading from the N-terminus, the 456-residue chain is Adenylosuccinate lyase (456 aa).

Residues 15 to 16 (RY), 90 to 92 (NHD), and 122 to 123 (TS) each bind N(6)-(1,2-dicarboxyethyl)-AMP. Residue histidine 171 is the Proton donor/acceptor of the active site. Residue glutamine 248 coordinates N(6)-(1,2-dicarboxyethyl)-AMP. The Proton donor/acceptor role is filled by serine 296. N(6)-(1,2-dicarboxyethyl)-AMP contacts are provided by residues serine 297, 302-304 (KVN), asparagine 310, arginine 336, and 341-345 (STVLR).

Belongs to the lyase 1 family. Adenylosuccinate lyase subfamily. In terms of assembly, homotetramer.

The catalysed reaction is N(6)-(1,2-dicarboxyethyl)-AMP = fumarate + AMP. It carries out the reaction (2S)-2-[5-amino-1-(5-phospho-beta-D-ribosyl)imidazole-4-carboxamido]succinate = 5-amino-1-(5-phospho-beta-D-ribosyl)imidazole-4-carboxamide + fumarate. It catalyses the reaction (2S)-2-amino-2'-deoxyadenylo-succinate = dZMP + fumarate. It functions in the pathway purine metabolism; AMP biosynthesis via de novo pathway; AMP from IMP: step 2/2. It participates in purine metabolism; IMP biosynthesis via de novo pathway; 5-amino-1-(5-phospho-D-ribosyl)imidazole-4-carboxamide from 5-amino-1-(5-phospho-D-ribosyl)imidazole-4-carboxylate: step 2/2. The protein operates within purine metabolism. Functionally, catalyzes two reactions in de novo purine nucleotide biosynthesis. Catalyzes the breakdown of 5-aminoimidazole- (N-succinylocarboxamide) ribotide (SAICAR or 2-[5-amino-1-(5-phospho-beta-D-ribosyl)imidazole-4-carboxamido]succinate) to 5-aminoimidazole-4-carboxamide ribotide (AICAR or 5-amino-1-(5-phospho-beta-D-ribosyl)imidazole-4-carboxamide) and fumarate, and of adenylosuccinate (ADS or N(6)-(1,2-dicarboxyethyl)-AMP) to adenosine monophosphate (AMP) and fumarate. In terms of biological role, (Microbial infection) Catalyzes the conversion of 2-amino-2'-deoxyadenylo-succinate to dZMP and fumarate, when the bacterium is infected by a phage that produces the substrate of this reaction, a step in the synthesis of dZTP (2-amino-2'-deoxyadenosine 5'-triphosphate), which is a nucleotide then used by the phage as a DNA polymerase substrate. This is Adenylosuccinate lyase from Vibrio cholerae serotype O1 (strain ATCC 39541 / Classical Ogawa 395 / O395).